A 253-amino-acid chain; its full sequence is Ribosomal RNA small subunit methyltransferase J (253 aa).

S-adenosyl-L-methionine contacts are provided by residues 98–99 (RD), 114–115 (ER), 150–151 (SS), and Asp172.

This sequence belongs to the methyltransferase superfamily. RsmJ family.

The protein localises to the cytoplasm. The enzyme catalyses guanosine(1516) in 16S rRNA + S-adenosyl-L-methionine = N(2)-methylguanosine(1516) in 16S rRNA + S-adenosyl-L-homocysteine + H(+). Its function is as follows. Specifically methylates the guanosine in position 1516 of 16S rRNA. The chain is Ribosomal RNA small subunit methyltransferase J from Shewanella pealeana (strain ATCC 700345 / ANG-SQ1).